A 405-amino-acid polypeptide reads, in one-letter code: MAVKTLKDLLDEGVDGRHVIVRSDFNVPLNDDREITDKGRIIASLPTLKALSEGGAKVIVMAHLGRPKGEVNEKYSLAPVAEALSDELGQYVALAADVVGEDAHERANGLTEGDILLLENVRFDPRETSKDEAERTAFAQELAALAADNGAFVSDGFGVVHRAQTSVYDIAKLLPHYAGGLVETEISVLEKIAESPEAPYVVVLGGSKVSDKIGVIEALAAKADKIIVGGGMCYTFLAAQGHNVQQSLLQEEMKETCTDLLARFGDKIVLPVDLVAASEFNKDAEKQIVDLDSIPEGWMSLDIGPESVKNFGEVLSTAKTIFWNGPMGVFEFAAFSEGTRGIAQAIIDATAGNDAFSVVGGGDSAASVRVLGLNEDGFSHISTGGGASLEYLEGKELPGVAILAQ.

Substrate-binding positions include 24–26 (DFN), R40, 63–66 (HLGR), R122, and R162. Residues K212, E331, and 361–364 (GGDS) contribute to the ATP site.

Belongs to the phosphoglycerate kinase family. In terms of assembly, monomer.

It localises to the cytoplasm. The catalysed reaction is (2R)-3-phosphoglycerate + ATP = (2R)-3-phospho-glyceroyl phosphate + ADP. Its pathway is carbohydrate degradation; glycolysis; pyruvate from D-glyceraldehyde 3-phosphate: step 2/5. This is Phosphoglycerate kinase from Corynebacterium glutamicum (strain R).